The sequence spans 318 residues: Malate dehydrogenase (318 aa).

NAD(+) is bound by residues 10–15 and Asp34; that span reads GGGQIG. Residues Arg83 and Arg89 each coordinate substrate. NAD(+)-binding positions include Asn96 and 119 to 121; that span reads ISN. The substrate site is built by Asn121 and Arg152. His176 serves as the catalytic Proton acceptor.

This sequence belongs to the LDH/MDH superfamily. MDH type 3 family.

It carries out the reaction (S)-malate + NAD(+) = oxaloacetate + NADH + H(+). Catalyzes the reversible oxidation of malate to oxaloacetate. In Geotalea uraniireducens (strain Rf4) (Geobacter uraniireducens), this protein is Malate dehydrogenase.